The following is a 317-amino-acid chain: tRNA(Ile)-lysidine synthase (317 aa).

30 to 35 serves as a coordination point for ATP; the sequence is SGGSDS.

The protein belongs to the tRNA(Ile)-lysidine synthase family.

The protein localises to the cytoplasm. The enzyme catalyses cytidine(34) in tRNA(Ile2) + L-lysine + ATP = lysidine(34) in tRNA(Ile2) + AMP + diphosphate + H(+). Ligates lysine onto the cytidine present at position 34 of the AUA codon-specific tRNA(Ile) that contains the anticodon CAU, in an ATP-dependent manner. Cytidine is converted to lysidine, thus changing the amino acid specificity of the tRNA from methionine to isoleucine. The sequence is that of tRNA(Ile)-lysidine synthase from Chlamydia abortus (strain DSM 27085 / S26/3) (Chlamydophila abortus).